The primary structure comprises 377 residues: Protein ECM9 (377 aa).

In terms of biological role, may be involved in cell wall organization and biogenesis. In Saccharomyces cerevisiae (strain ATCC 204508 / S288c) (Baker's yeast), this protein is Protein ECM9 (ECM9).